Reading from the N-terminus, the 90-residue chain is Probable Fe(2+)-trafficking protein (90 aa).

This sequence belongs to the Fe(2+)-trafficking protein family.

Could be a mediator in iron transactions between iron acquisition and iron-requiring processes, such as synthesis and/or repair of Fe-S clusters in biosynthetic enzymes. The chain is Probable Fe(2+)-trafficking protein from Vibrio atlanticus (strain LGP32) (Vibrio splendidus (strain Mel32)).